A 291-amino-acid polypeptide reads, in one-letter code: Nucleotide-binding protein lin2617 (291 aa).

An ATP-binding site is contributed by 13–20 (GMSGAGKT). 63 to 66 (DLRG) provides a ligand contact to GTP.

This sequence belongs to the RapZ-like family.

Displays ATPase and GTPase activities. In Listeria innocua serovar 6a (strain ATCC BAA-680 / CLIP 11262), this protein is Nucleotide-binding protein lin2617.